We begin with the raw amino-acid sequence, 555 residues long: Oligo-1,6-glucosidase (555 aa).

Asp199 functions as the Nucleophile in the catalytic mechanism. Glu255 serves as the catalytic Proton donor.

Belongs to the glycosyl hydrolase 13 family.

Its subcellular location is the cytoplasm. The enzyme catalyses Hydrolysis of (1-&gt;6)-alpha-D-glucosidic linkages in some oligosaccharides produced from starch and glycogen by alpha-amylase, and in isomaltose.. The sequence is that of Oligo-1,6-glucosidase (malL) from Heyndrickxia coagulans (Weizmannia coagulans).